The sequence spans 223 residues: Deoxyribose-phosphate aldolase (223 aa).

D91 acts as the Proton donor/acceptor in catalysis. K154 acts as the Schiff-base intermediate with acetaldehyde in catalysis. K183 functions as the Proton donor/acceptor in the catalytic mechanism.

This sequence belongs to the DeoC/FbaB aldolase family. DeoC type 1 subfamily.

The protein localises to the cytoplasm. The catalysed reaction is 2-deoxy-D-ribose 5-phosphate = D-glyceraldehyde 3-phosphate + acetaldehyde. The protein operates within carbohydrate degradation; 2-deoxy-D-ribose 1-phosphate degradation; D-glyceraldehyde 3-phosphate and acetaldehyde from 2-deoxy-alpha-D-ribose 1-phosphate: step 2/2. Its function is as follows. Catalyzes a reversible aldol reaction between acetaldehyde and D-glyceraldehyde 3-phosphate to generate 2-deoxy-D-ribose 5-phosphate. This Geobacillus thermodenitrificans (strain NG80-2) protein is Deoxyribose-phosphate aldolase.